A 79-amino-acid chain; its full sequence is Major outer membrane lipoprotein Lpp 2 (79 aa).

The N-terminal stretch at 1 to 21 (MNRTNQLILGAVVLGSTLLAG) is a signal peptide. The N-palmitoyl cysteine moiety is linked to residue Cys-22. The S-diacylglycerol cysteine moiety is linked to residue Cys-22. 2 consecutive repeats follow at residues 25–35 (NAKIDQLSSDV) and 39–49 (SAKVEQLSNDV). The stretch at 28–69 (IDQLSSDVQTLSAKVEQLSNDVNAMRSDVQAAKDDAARANQR) forms a coiled coil. Position 79 is an N6-murein peptidoglycan lysine (Lys-79).

The protein belongs to the Lpp family. In terms of assembly, homotrimer.

The protein resides in the cell outer membrane. It localises to the secreted. The protein localises to the cell wall. Plays an important role in virulence. A highly abundant outer membrane lipoprotein that controls the distance between the inner and outer membranes. The only protein known to be covalently linked to the peptidoglycan network (PGN). Also non-covalently binds the PGN. The link between the cell outer membrane and PGN contributes to maintenance of the structural and functional integrity of the cell envelope, and maintains the correct distance between the PGN and the outer membrane. The protein is Major outer membrane lipoprotein Lpp 2 of Salmonella typhimurium (strain LT2 / SGSC1412 / ATCC 700720).